A 720-amino-acid chain; its full sequence is NADH-ubiquinone oxidoreductase 78 kDa subunit, mitochondrial (720 aa).

Residues 1-23 constitute a mitochondrion transit peptide; that stretch reads MNSIKSHILRSSKRYISASSKRL. In terms of domain architecture, 2Fe-2S ferredoxin-type spans 24–102; that stretch reads AEVEVTVDGR…GMVVHTDSER (79 aa). [2Fe-2S] cluster-binding residues include cysteine 58, cysteine 69, cysteine 72, and cysteine 86. One can recognise a 4Fe-4S His(Cys)3-ligated-type domain in the interval 102 to 141; sequence RIKKAREGVTEMLLENHPLDCPVCDQGGECDLQEQSQRYG. In terms of domain architecture, 4Fe-4S Mo/W bis-MGD-type spans 241 to 297; that stretch reads LKRTETIDVLDAVGSNIRVDTRGIEVMRVLPRLNDDVNEEWISDKTRFACDGLKTQR.

It belongs to the complex I 75 kDa subunit family. Core subunit of respiratory chain NADH dehydrogenase (Complex I) which is composed of 45 different subunits. This is the largest subunit of complex I and it is a component of the iron-sulfur (IP) fragment of the enzyme. [2Fe-2S] cluster serves as cofactor. [4Fe-4S] cluster is required as a cofactor.

Its subcellular location is the mitochondrion. The enzyme catalyses a ubiquinone + NADH + 5 H(+)(in) = a ubiquinol + NAD(+) + 4 H(+)(out). In terms of biological role, core subunit of the mitochondrial membrane respiratory chain NADH dehydrogenase (Complex I) which catalyzes electron transfer from NADH through the respiratory chain, using ubiquinone as an electron acceptor. Essential for catalysing the entry and efficient transfer of electrons within complex I. Plays a key role in the assembly and stability of complex I and participates in the association of complex I with ubiquinol-cytochrome reductase complex (Complex III) to form supercomplexes. Plays a role in cell wall integrity and is involved in osmotic and oxidative resistance, yeast to hypha transition, and the ability to damage and invade oral epithelial cells. The polypeptide is NADH-ubiquinone oxidoreductase 78 kDa subunit, mitochondrial (Candida albicans (strain SC5314 / ATCC MYA-2876) (Yeast)).